The primary structure comprises 28 residues: Dermaseptin-H2 (28 aa).

Belongs to the frog skin active peptide (FSAP) family. Dermaseptin subfamily. Expressed by the skin glands.

It localises to the secreted. In terms of biological role, possesses a potent antimicrobial activity against Gram-positive and Gram-negative bacteria. Probably acts by disturbing membrane functions with its amphipathic structure. This Pithecopus azureus (Orange-legged monkey tree frog) protein is Dermaseptin-H2.